Here is a 443-residue protein sequence, read N- to C-terminus: Ribosomal protein uS12 methylthiotransferase RimO (443 aa).

Residues 5-115 (PNIGFISLGC…VMKHVHKYVP (111 aa)) form the MTTase N-terminal domain. 6 residues coordinate [4Fe-4S] cluster: C14, C50, C79, C147, C151, and C154. Residues 133–374 (LTPKHYAYLK…MQVQQRISAA (242 aa)) form the Radical SAM core domain. One can recognise a TRAM domain in the interval 377-443 (QQKVGKTLAV…ADEYDLWGTC (67 aa)).

The protein belongs to the methylthiotransferase family. RimO subfamily. [4Fe-4S] cluster is required as a cofactor.

It localises to the cytoplasm. It catalyses the reaction L-aspartate(89)-[ribosomal protein uS12]-hydrogen + (sulfur carrier)-SH + AH2 + 2 S-adenosyl-L-methionine = 3-methylsulfanyl-L-aspartate(89)-[ribosomal protein uS12]-hydrogen + (sulfur carrier)-H + 5'-deoxyadenosine + L-methionine + A + S-adenosyl-L-homocysteine + 2 H(+). Catalyzes the methylthiolation of an aspartic acid residue of ribosomal protein uS12. The chain is Ribosomal protein uS12 methylthiotransferase RimO from Actinobacillus pleuropneumoniae serotype 7 (strain AP76).